We begin with the raw amino-acid sequence, 139 residues long: TDP-4-oxo-6-deoxy-alpha-D-glucose-3,4-oxoisomerase (139 aa).

His-49 (proton acceptor) is an active-site residue.

As to quaternary structure, homodimer.

It carries out the reaction dTDP-4-dehydro-6-deoxy-alpha-D-glucose = dTDP-3-dehydro-6-deoxy-alpha-D-galactose. Its function is as follows. Mediates the isomerization of dTDP-6-deoxy-D-xylohex-4-ulose into dTDP-6-deoxy-D-xylohex-3-ulose in the biosynthesis of dTDP-3-acetamido-3,6-dideoxy-alpha-D-galactose, a glycan chain of the S-layer. The protein is TDP-4-oxo-6-deoxy-alpha-D-glucose-3,4-oxoisomerase (fdtA) of Aneurinibacillus thermoaerophilus.